The following is a 150-amino-acid chain: D-aminoacyl-tRNA deacylase (150 aa).

Residues 138–139 (GP) carry the Gly-cisPro motif, important for rejection of L-amino acids motif.

The protein belongs to the DTD family. As to quaternary structure, homodimer.

The protein localises to the cytoplasm. It catalyses the reaction glycyl-tRNA(Ala) + H2O = tRNA(Ala) + glycine + H(+). The enzyme catalyses a D-aminoacyl-tRNA + H2O = a tRNA + a D-alpha-amino acid + H(+). Functionally, an aminoacyl-tRNA editing enzyme that deacylates mischarged D-aminoacyl-tRNAs. Also deacylates mischarged glycyl-tRNA(Ala), protecting cells against glycine mischarging by AlaRS. Acts via tRNA-based rather than protein-based catalysis; rejects L-amino acids rather than detecting D-amino acids in the active site. By recycling D-aminoacyl-tRNA to D-amino acids and free tRNA molecules, this enzyme counteracts the toxicity associated with the formation of D-aminoacyl-tRNA entities in vivo and helps enforce protein L-homochirality. The chain is D-aminoacyl-tRNA deacylase from Bacteroides fragilis (strain YCH46).